Consider the following 56-residue polypeptide: Meucin-25 (56 aa).

An N-terminal signal peptide occupies residues 1–31; the sequence is MFRIEYSLVQLLLRNVTIPLLLIIQMHIMSS.

It belongs to the non-disulfide-bridged peptide (NDBP) superfamily. Antimalarial peptide (group 5) family. Expressed by the venom gland.

Its subcellular location is the secreted. Its function is as follows. This synthetic cationic peptide inhibits the development of Plasmodium berghei ookinetes, kills intraerythrocytic P.falciparum, and is cytotoxic to the Drosophila S2 cell at micromolar concentrations. No antibacterial, antifungal and hemolytic activities have been found at micromolar concentrations. This chain is Meucin-25, found in Mesobuthus eupeus (Lesser Asian scorpion).